The chain runs to 288 residues: Serpentine receptor class gamma-1 (288 aa).

Transmembrane regions (helical) follow at residues 25 to 45, 59 to 79, 118 to 138, 148 to 168, 197 to 217, 238 to 258, and 268 to 288; these read LFLQ…VIYI, FYTI…FSIF, FQIL…LWPL, LKSI…TIAI, FSIL…TMLI, VYLS…FLVL, and ILHG…TYVM.

Belongs to the nematode receptor-like protein srg family.

It is found in the membrane. In Caenorhabditis elegans, this protein is Serpentine receptor class gamma-1 (srg-1).